A 172-amino-acid chain; its full sequence is 3-hydroxydecanoyl-[acyl-carrier-protein] dehydratase (172 aa).

His71 is a catalytic residue.

The protein belongs to the thioester dehydratase family. FabA subfamily. Homodimer.

Its subcellular location is the cytoplasm. It carries out the reaction a (3R)-hydroxyacyl-[ACP] = a (2E)-enoyl-[ACP] + H2O. It catalyses the reaction (3R)-hydroxydecanoyl-[ACP] = (2E)-decenoyl-[ACP] + H2O. The catalysed reaction is (2E)-decenoyl-[ACP] = (3Z)-decenoyl-[ACP]. It participates in lipid metabolism; fatty acid biosynthesis. Necessary for the introduction of cis unsaturation into fatty acids. Catalyzes the dehydration of (3R)-3-hydroxydecanoyl-ACP to E-(2)-decenoyl-ACP and then its isomerization to Z-(3)-decenoyl-ACP. Can catalyze the dehydratase reaction for beta-hydroxyacyl-ACPs with saturated chain lengths up to 16:0, being most active on intermediate chain length. The polypeptide is 3-hydroxydecanoyl-[acyl-carrier-protein] dehydratase (Escherichia coli O139:H28 (strain E24377A / ETEC)).